Consider the following 86-residue polypeptide: Neurotoxin-like protein pMD18-NTL1/2/4/5 (86 aa).

Residues 1 to 21 (MKTLLLTLVVLTIACLDLGYT) form the signal peptide. 4 disulfides stabilise this stretch: Cys24/Cys45, Cys38/Cys62, Cys66/Cys78, and Cys79/Cys84.

Belongs to the three-finger toxin family. Short-chain subfamily. Orphan group IX sub-subfamily. Expressed by the venom gland.

The protein localises to the secreted. This Bungarus multicinctus (Many-banded krait) protein is Neurotoxin-like protein pMD18-NTL1/2/4/5.